The sequence spans 209 residues: Ribosomal RNA large subunit methyltransferase E (209 aa).

Gly63, Trp65, Asp83, Asp99, and Asp124 together coordinate S-adenosyl-L-methionine. Catalysis depends on Lys164, which acts as the Proton acceptor.

Belongs to the class I-like SAM-binding methyltransferase superfamily. RNA methyltransferase RlmE family.

The protein localises to the cytoplasm. The catalysed reaction is uridine(2552) in 23S rRNA + S-adenosyl-L-methionine = 2'-O-methyluridine(2552) in 23S rRNA + S-adenosyl-L-homocysteine + H(+). Functionally, specifically methylates the uridine in position 2552 of 23S rRNA at the 2'-O position of the ribose in the fully assembled 50S ribosomal subunit. The sequence is that of Ribosomal RNA large subunit methyltransferase E from Buchnera aphidicola subsp. Cinara cedri (strain Cc).